The chain runs to 423 residues: MSYVIDRRLNGKNKSTVNRQRFLRRYREHIKKAVEEAVSRRSITDMEHGEQISIPGRDIDEPVLHHGRGGRQTVVHPGNKEFTAGEHIARPSGGGGGRGGGKASNSGEGMDDFVFQITQEEFLDFMFEDLELPNLVKRHITGTDTFKTIRAGISNDGNPSRINIVRTLRSAHARRIALSGGSRAKLRAALKELERIRREEPDNLGDIQELELEIAKLRARIDRVPFLDTFDLKYNLLVKQPNPTSKAVMFCLMDVSGSMTQATKDIAKRFFILLYLFLKRNYEKIEVVFIRHHTSAREVDEEEFFYSRETGGTIVSSALKMMQEIMAERYPTHEWNIYAAQASDGDNWNDDSPVCRDILLKQIMPFVQYYTYVEITPREHQALWFEYERVREAFEDSFAQQQIVSASDIYPVFRELFQRRLVA.

A disordered region spans residues Ala84–Gly107. A compositionally biased stretch (gly residues) spans Ser92 to Lys102.

It belongs to the UPF0229 family.

This is UPF0229 protein PSPA7_0730 from Pseudomonas paraeruginosa (strain DSM 24068 / PA7) (Pseudomonas aeruginosa (strain PA7)).